The chain runs to 559 residues: Subtelomeric hrmA-associated cluster protein AFUB_079030 (559 aa).

Disordered regions lie at residues 163–190, 298–351, 427–451, and 525–559; these read AKHP…TKPE, RESN…TGMA, SITS…HSAS, and FRTG…RPHV. The segment covering 169–179 has biased composition (low complexity); the sequence is GGKPPAGAPPG. 2 stretches are compositionally biased toward basic and acidic residues: residues 180–189 and 300–325; these read KKGDPEKTKP and SNQK…DNAR. Over residues 336 to 346 the composition is skewed to polar residues; sequence NSTSPMSNSAE.

Part of the subtelomeric hrmA-associated cluster (HAC) containing genes that alter the hyphal surface (such as reduced total chitin or increased beta-glucan exposure) and perturb inter-hyphal interactions within the developing biofilms, resulting in a loss of vertically aligned polarized growing filaments. Consequently, this hypoxia-typic morphotype (called H-MORPH) with altered biofilm architecture leads to increased hypoxia fitness, increased host inflammation, rapid disease progression, and mortality in a murine model of invasive aspergillosis. The protein is Subtelomeric hrmA-associated cluster protein AFUB_079030 of Aspergillus fumigatus (strain CBS 144.89 / FGSC A1163 / CEA10) (Neosartorya fumigata).